The sequence spans 188 residues: GMP synthase [glutamine-hydrolyzing] subunit A (188 aa).

One can recognise a Glutamine amidotransferase type-1 domain in the interval 1–188 (MIVIMDNGGQ…RNFAKLCGEL (188 aa)). C78 acts as the Nucleophile in catalysis. Catalysis depends on residues H165 and E167.

As to quaternary structure, heterodimer composed of a glutamine amidotransferase subunit (A) and a GMP-binding subunit (B).

It catalyses the reaction XMP + L-glutamine + ATP + H2O = GMP + L-glutamate + AMP + diphosphate + 2 H(+). Its pathway is purine metabolism; GMP biosynthesis; GMP from XMP (L-Gln route): step 1/1. In terms of biological role, catalyzes the synthesis of GMP from XMP. The protein is GMP synthase [glutamine-hydrolyzing] subunit A of Pyrococcus abyssi (strain GE5 / Orsay).